Consider the following 260-residue polypeptide: Global transcriptional regulator CodY (260 aa).

Residues 1–159 are GAF domain; the sequence is MPNLLEKTRK…SSTVVGIQLL (159 aa). Positions 207–226 form a DNA-binding region, H-T-H motif; the sequence is ASVIADRIGITRSVIVNALR.

It belongs to the CodY family.

Its subcellular location is the cytoplasm. Functionally, DNA-binding global transcriptional regulator which is involved in the adaptive response to starvation and acts by directly or indirectly controlling the expression of numerous genes in response to nutrient availability. During rapid exponential growth, CodY is highly active and represses genes whose products allow adaptation to nutrient depletion. This Streptococcus uberis (strain ATCC BAA-854 / 0140J) protein is Global transcriptional regulator CodY.